Reading from the N-terminus, the 403-residue chain is 3-hydroxy-3-methylglutaryl-coenzyme A reductase (403 aa).

Active-site charge relay system residues include E99 and D303. H398 functions as the Proton donor in the catalytic mechanism.

Belongs to the HMG-CoA reductase family.

It carries out the reaction (R)-mevalonate + 2 NADP(+) + CoA = (3S)-3-hydroxy-3-methylglutaryl-CoA + 2 NADPH + 2 H(+). It functions in the pathway metabolic intermediate biosynthesis; (R)-mevalonate biosynthesis; (R)-mevalonate from acetyl-CoA: step 3/3. Is competitively inhibited by (R)-HMG-CoA and lovastatin (formerly called mevinolin). In terms of biological role, catalyzes the NADPH-dependent reductive deacylation of (S)-3-hydroxy-3-methylglutaryl-CoA (HMG-CoA) to (R)-mevalonate. Functions in the mevalonate (MVA) pathway leading to isopentenyl diphosphate (IPP), a key precursor for the biosynthesis of isoprenoid compounds such as archaeal membrane lipids. Is also able to catalyze the reduction of mevaldehyde to mevalonate and the oxidative acylation of mevaldehyde to HMG-CoA. This is 3-hydroxy-3-methylglutaryl-coenzyme A reductase (hmgA) from Haloferax volcanii (strain ATCC 29605 / DSM 3757 / JCM 8879 / NBRC 14742 / NCIMB 2012 / VKM B-1768 / DS2) (Halobacterium volcanii).